A 493-amino-acid chain; its full sequence is MSELTALTIAEARDKLKAKAITATELTDAYLSAIDSANETINAYVKVTHDQARSMAKASDERIAKGEAGALEGIPLGVKDLFATKGVHTQACSHILDGFKPEYESTVTANLWADGAVMLGKLNMDEFAMGSSNETSYYGSVKNPWRANGSNADLVPGGSSGGSAAAVAAQLCAGATATDTGGSIRQPAAFTGTVGIKPTYGRVSRWGTVAFASSLDQAGPIARDVRDAAILLKSMASLDLKDTTSVDLPIPDYEAAIGKSLKGMKIGIPKEYRVDGMPDEIEELWQKGIQYLKDAGAEIIDISLPNTKYALPAYYIVAPAEASSNLARYDGVRYGLRVPGKDIADMYEQTRAAGFGKEVKRRIMIGTYVLSAGYYDAYYLRAQKVRTLIKKDFEDVFAKGVHAILTPATPSAAFGLADEDLANDPVKMYLNDIFTVTVNMAGLPGIAVPAGINDKGLPLGLQLIGRPFEEETLFQAAHAIEQAAGRFTPAKWW.

Active-site charge relay system residues include lysine 79 and serine 159. Serine 183 (acyl-ester intermediate) is an active-site residue.

It belongs to the amidase family. GatA subfamily. As to quaternary structure, heterotrimer of A, B and C subunits.

The enzyme catalyses L-glutamyl-tRNA(Gln) + L-glutamine + ATP + H2O = L-glutaminyl-tRNA(Gln) + L-glutamate + ADP + phosphate + H(+). Functionally, allows the formation of correctly charged Gln-tRNA(Gln) through the transamidation of misacylated Glu-tRNA(Gln) in organisms which lack glutaminyl-tRNA synthetase. The reaction takes place in the presence of glutamine and ATP through an activated gamma-phospho-Glu-tRNA(Gln). The chain is Glutamyl-tRNA(Gln) amidotransferase subunit A from Brucella anthropi (strain ATCC 49188 / DSM 6882 / CCUG 24695 / JCM 21032 / LMG 3331 / NBRC 15819 / NCTC 12168 / Alc 37) (Ochrobactrum anthropi).